A 320-amino-acid chain; its full sequence is tRNA N6-adenosine threonylcarbamoyltransferase (320 aa).

Fe cation contacts are provided by His114 and His118. Residues 136–140 (VVSGG), Asp169, Gly182, Asp186, and Asn273 contribute to the substrate site. Residue Asp297 coordinates Fe cation.

The protein belongs to the KAE1 / TsaD family. It depends on Fe(2+) as a cofactor.

It is found in the cytoplasm. The enzyme catalyses L-threonylcarbamoyladenylate + adenosine(37) in tRNA = N(6)-L-threonylcarbamoyladenosine(37) in tRNA + AMP + H(+). Required for the formation of a threonylcarbamoyl group on adenosine at position 37 (t(6)A37) in tRNAs that read codons beginning with adenine. Is involved in the transfer of the threonylcarbamoyl moiety of threonylcarbamoyl-AMP (TC-AMP) to the N6 group of A37, together with TsaE and TsaB. TsaD likely plays a direct catalytic role in this reaction. This is tRNA N6-adenosine threonylcarbamoyltransferase from Ureaplasma urealyticum serovar 10 (strain ATCC 33699 / Western).